A 511-amino-acid polypeptide reads, in one-letter code: Maturase K (511 aa).

It belongs to the intron maturase 2 family. MatK subfamily.

It is found in the plastid. The protein localises to the chloroplast. Functionally, usually encoded in the trnK tRNA gene intron. Probably assists in splicing its own and other chloroplast group II introns. This chain is Maturase K, found in Campsis radicans (Trumpet creeper).